Here is a 1164-residue protein sequence, read N- to C-terminus: Avirulence protein AvrBs3 (1164 aa).

Disordered stretches follow at residues M1–S68 and A128–Q152. Residues P131–A141 show a composition bias toward basic residues. The span at A142–A151 shows a compositional bias: low complexity. The stretch at I225–Q254 is one Cryptic repeat -1 repeat. The Cryptic repeat 0 repeat unit spans residues L255–N288. Core repeat repeat units follow at residues L289–G322, L323–G356, L357–G390, L391–G424, L425–G458, L459–G492, L493–G526, L527–G560, L561–G594, L595–G628, L629–G662, L663–G696, L697–G730, L731–G764, L765–G798, L799–G832, and L833–G866. A Core repeat 17.5 repeat occupies L867–E886. Positions K1021 to K1024 match the Nuclear localization signal NLS1 motif. The segment covering D1048 to Q1060 has biased composition (basic and acidic residues). The tract at residues D1048–Q1091 is disordered. The short motif at K1067–R1070 is the Nuclear localization signal NLS2 element. Residues K1104–R1107 carry the Nuclear localization signal NLS3 motif. Positions Q1135–Q1164 are acidic activation domain AAD.

This sequence belongs to the transcription activator-like effector (TALE) family. Forms a homodimer in the plant cell cytoplasm, prior to nuclear import. Interacts with the plant cell importin alpha-1 (Caimp alpha-1) and importin alpha-2 (Caimp alpha-2) via the nuclear localization signal NLS2, but not via NLS3.

It is found in the secreted. It localises to the host nucleus. Its function is as follows. Avirulence protein. Acts as a transcription factor in C.annuum plants. In susceptible plants lacking the Bs3 resistance gene induces expression of a number of genes, including genes homologous to a family of auxin-induced genes, alpha-expansin genes, pectate lyase, anthocyanidin glucoside rhamnosyl transferase and at least one transcription factor, UPA20. Their expression leads to plant hypertrophy in mesophyll cells, probably mainly mediated by UPA20. In resistant plants induces the hypersensitive response (HR), by inducing transcription of plant Bs3 which induces HR; a mutated AvrBs3 missing repeats 11-14 does not induce expression of Bs3 but does induce Bs3-E, a Bs3 allele with a modified promoter. Binds DNA corresponding to the upa-box in sequence-specific manner. This Xanthomonas euvesicatoria protein is Avirulence protein AvrBs3 (avrBs3).